We begin with the raw amino-acid sequence, 423 residues long: ATP-citrate synthase alpha chain protein 2 (423 aa).

Positions 343, 345, and 376 each coordinate citrate.

Belongs to the succinate/malate CoA ligase beta subunit family. As to quaternary structure, heterooctamer of 4 alpha and 4 beta chains.

Its subcellular location is the cytoplasm. It localises to the cytosol. It catalyses the reaction oxaloacetate + acetyl-CoA + ADP + phosphate = citrate + ATP + CoA. Its function is as follows. ATP citrate-lyase is the primary enzyme responsible for the synthesis of cytosolic acetyl-CoA, used for the elongation of fatty acids and biosynthesis of isoprenoids, flavonoids and malonated derivatives. May supply substrate to the cytosolic acetyl-CoA carboxylase, which generates the malonyl-CoA used for the synthesis of a multitude of compounds, including very long chain fatty acids and flavonoids. In contrast to all known animal ACL enzymes having a homomeric structure, plant ACLs are composed of alpha and beta chains. The protein is ATP-citrate synthase alpha chain protein 2 (ACLA-2) of Oryza sativa subsp. japonica (Rice).